The primary structure comprises 330 residues: Mas-related G-protein coupled receptor member X2 (330 aa).

Residues 1–33 (MDPTTPAWGTESTTMNGNDQALPLLCGKETLIL) lie on the Extracellular side of the membrane. The chain crosses the membrane as a helical span at residues 34–54 (VLLILFIALVGLVGNAFVLWL). At 55–63 (LGFRMRRNA) the chain is on the cytoplasmic side. A helical transmembrane segment spans residues 64–84 (FSVYVLSLAGADFLFLCFPMI). At 85–96 (NCLEYLINFFHS) the chain is on the extracellular side. A helical membrane pass occupies residues 97–117 (ISINFPSFFTTVMTCAYLAGL). Residues 118 to 144 (SMLSAISTERCLSVLWPIWYRCRRPRH) lie on the Cytoplasmic side of the membrane. The helical transmembrane segment at 145–165 (LSAVLCVLLWALSLLLSILEG) threads the bilayer. The Extracellular portion of the chain corresponds to 166–184 (KFCGLLFSDGDSGWCQTFD). A helical membrane pass occupies residues 185 to 205 (FITAAWLMFLFVVLCGSSLAL). The Cytoplasmic segment spans residues 206–228 (LVRILCGSQGLPLTRLYLTILLT). Residues 229–249 (VLIFLLCGLPFGIQWFLILWI) traverse the membrane as a helical segment. The Extracellular portion of the chain corresponds to 250–264 (WKNSDVLFCHIHPVS). A helical membrane pass occupies residues 265–285 (VVLSSFNSSANPIIYFFVGSF). Over 286–330 (RKQWRLRQPVLKLALQRALQDTAEVDHSEGCFSQGTLEMSGSSLV) the chain is Cytoplasmic.

It belongs to the G-protein coupled receptor 1 family. Mas subfamily.

It localises to the cell membrane. In terms of biological role, mast cell-specific receptor for basic secretagogues, i.e. cationic amphiphilic drugs, as well as endo- or exogenous peptides, consisting of a basic head group and a hydrophobic core. Recognizes and binds small molecules containing a cyclized tetrahydroisoquinoline (THIQ), such as non-steroidal neuromuscular blocking drugs (NMBDs), including tubocurarine and atracurium. In response to these compounds, mediates pseudo-allergic reactions characterized by histamine release, inflammation and airway contraction. The protein is Mas-related G-protein coupled receptor member X2 (MRGPRX2) of Rhinopithecus bieti (Black snub-nosed monkey).